The chain runs to 472 residues: Adenosylhomocysteinase (472 aa).

Positions 61, 136, and 196 each coordinate substrate. Residue 197–199 coordinates NAD(+); sequence TTT. Lys-226 and Asp-230 together coordinate substrate. NAD(+) contacts are provided by residues Asn-231, 260-265, Glu-283, Asn-318, 339-341, and Asn-384; these read GYGDVG and IGH.

Belongs to the adenosylhomocysteinase family. NAD(+) serves as cofactor.

The protein resides in the cytoplasm. It carries out the reaction S-adenosyl-L-homocysteine + H2O = L-homocysteine + adenosine. It participates in amino-acid biosynthesis; L-homocysteine biosynthesis; L-homocysteine from S-adenosyl-L-homocysteine: step 1/1. Functionally, may play a key role in the regulation of the intracellular concentration of adenosylhomocysteine. In Cupriavidus pinatubonensis (strain JMP 134 / LMG 1197) (Cupriavidus necator (strain JMP 134)), this protein is Adenosylhomocysteinase.